The chain runs to 1454 residues: Beta-1,3-glucan-binding protein (1454 aa).

The propeptide occupies 1–197 (MSFDLTTPFD…KRSLEMRMMN (197 aa)). Asn-33, Asn-55, Asn-185, Asn-571, Asn-592, Asn-825, Asn-882, and Asn-1153 each carry an N-linked (GlcNAc...) asparagine glycan.

It belongs to the glycosyl hydrolase 16 family. In terms of assembly, monomer. As to expression, expressed in the hepatopancreas and secreted into the hemolymph. Expressed at lower levels in muscle, pleopod and gill tissue.

The protein localises to the secreted. In terms of biological role, involved in the recognition of invading microorganisms. Binds specifically to beta-1,3-glucan and activates the prophenoloxidase cascade. This Penaeus vannamei (Whiteleg shrimp) protein is Beta-1,3-glucan-binding protein.